Consider the following 366-residue polypeptide: Inhibin alpha chain (366 aa).

The N-terminal stretch at 1–18 (MVLHLLLFLLLTPQGGHS) is a signal peptide. Residues 19–61 (CQGLELARELVLAKVRALFLDALGPPAVTREGGDPGVRRLPRR) constitute a propeptide that is removed on maturation. Residues 62 to 232 (HALGGFTHRG…PPSGGERARR (171 aa)) constitute a propeptide, inhibin alpha N-terminal region. Asn146 and Asn268 each carry an N-linked (GlcNAc...) asparagine glycan. 3 cysteine pairs are disulfide-bonded: Cys262/Cys328, Cys291/Cys363, and Cys295/Cys365. The N-linked (GlcNAc...) asparagine; partial glycan is linked to Asn302.

It belongs to the TGF-beta family. In terms of assembly, dimeric, linked by one or more disulfide bonds. Activin B is a dimer of alpha and beta-B. Inhibin A is a dimer of alpha and beta-A. Inhibin B is a dimer of alpha and beta-B. Interacts with TGFBR3L; this interaction regulates female fertility. In terms of processing, proteolytic processing yields a number of bioactive forms. The 20/23 kDa forms consist solely of the mature alpha chain, the 26/29 kDa forms consist of the most N-terminal propeptide linked through a disulfide bond to the mature alpha chain, the 50/53 kDa forms encompass the entire proprotein. Each type can be furthermore either mono- or diglycosylated, causing the mass difference. Originally found in ovary (granulosa cells) and testis (Sertoli cells), but widely distributed in many tissues including brain and placenta. In adrenal cortex expression is limited to the zona reticularis and the innermost zona fasciculata in the normal gland, extending centripetally into the zona fasciculata in hyperplasia. Also found in adrenocortical tumors. Also expressed in prostate epithelium of benign prostatic hyperplasia, in regions of basal cell hyperplasia and in nonmalignant regions of high grade prostate cancer. Only circulating inhibin B is found in male, whereas circulating inhibins A and B are found in female.

It is found in the secreted. Functionally, inhibins and activins inhibit and activate, respectively, the secretion of follitropin by the pituitary gland. Inhibins/activins are involved in regulating a number of diverse functions such as hypothalamic and pituitary hormone secretion, gonadal hormone secretion, germ cell development and maturation, erythroid differentiation, insulin secretion, nerve cell survival, embryonic axial development or bone growth, depending on their subunit composition. Inhibins appear to oppose the functions of activins. Its function is as follows. Inhibin A is a dimer of alpha/INHA and beta-A/INHBA that functions as a feedback regulator in the hypothalamic-pituitary-gonadal (HPG) axis. Inhibits the secretion of FSH from the anterior pituitary gland by acting on pituitary gonadotrope cells. Antagonizes activin A by binding to the proteoglycan, betaglycan, and forming a stable complex with and, thereby, sequestering type II activin receptors while excluding type I receptor. In terms of biological role, inhibin B is a dimer of alpha and beta-B that plays a crucial role in the regulation of the reproductive system by inhibiting the secretion of follicle-stimulating hormone (FSH) from the anterior pituitary gland. Thereby, maintains reproductive homeostasis in both males and females. Acts as a more potent suppressor of FSH release than inhibin A. Functions as competitive receptor antagonist binding activin type II receptors with high affinity in the presence of the TGF-beta type III coreceptor/TGFBR3L. The polypeptide is Inhibin alpha chain (INHA) (Homo sapiens (Human)).